A 364-amino-acid chain; its full sequence is Fructose-bisphosphate aldolase B (364 aa).

R56 and K147 together coordinate substrate. E188 (proton acceptor) is an active-site residue. The Schiff-base intermediate with dihydroxyacetone-P role is filled by K230.

It belongs to the class I fructose-bisphosphate aldolase family. In terms of assembly, homotetramer.

It is found in the cytoplasm. The protein resides in the cytoskeleton. The protein localises to the microtubule organizing center. Its subcellular location is the centrosome. It localises to the centriolar satellite. The enzyme catalyses beta-D-fructose 1,6-bisphosphate = D-glyceraldehyde 3-phosphate + dihydroxyacetone phosphate. It participates in carbohydrate degradation; glycolysis; D-glyceraldehyde 3-phosphate and glycerone phosphate from D-glucose: step 4/4. The polypeptide is Fructose-bisphosphate aldolase B (ALDOB) (Gallus gallus (Chicken)).